A 305-amino-acid polypeptide reads, in one-letter code: tRNA pseudouridine synthase B (305 aa).

The active-site Nucleophile is Asp-39.

Belongs to the pseudouridine synthase TruB family. Type 1 subfamily.

The enzyme catalyses uridine(55) in tRNA = pseudouridine(55) in tRNA. Responsible for synthesis of pseudouridine from uracil-55 in the psi GC loop of transfer RNAs. The chain is tRNA pseudouridine synthase B from Staphylococcus aureus (strain MW2).